The chain runs to 281 residues: Proteasome subunit beta (281 aa).

Positions 1–53 (MEANTRSTGRLPAAFLTPGSSSFMDFLGEHQPEMLPGNRQLPPVQGVIEAPHG) are cleaved as a propeptide — removed in mature form; by autocatalysis. The active-site Nucleophile is the T54.

This sequence belongs to the peptidase T1B family. As to quaternary structure, the 20S proteasome core is composed of 14 alpha and 14 beta subunits that assemble into four stacked heptameric rings, resulting in a barrel-shaped structure. The two inner rings, each composed of seven catalytic beta subunits, are sandwiched by two outer rings, each composed of seven alpha subunits. The catalytic chamber with the active sites is on the inside of the barrel. Has probably a gated structure, the ends of the cylinder being occluded by the N-termini of the alpha-subunits. Is likely capped by the proteasome-associated ATPase, ARC.

The protein resides in the cytoplasm. It catalyses the reaction Cleavage of peptide bonds with very broad specificity.. It participates in protein degradation; proteasomal Pup-dependent pathway. The formation of the proteasomal ATPase ARC-20S proteasome complex, likely via the docking of the C-termini of ARC into the intersubunit pockets in the alpha-rings, may trigger opening of the gate for substrate entry. Interconversion between the open-gate and close-gate conformations leads to a dynamic regulation of the 20S proteasome proteolysis activity. Peptidolytic activity is completely inhibited by lactacystin, and to a lesser extent, by N-acetyl-Leu-Leu-norleucinal (Ac-LLnL) and benzoyloxycarbonyl-Leu-Leu-Leu-vinylsulfone (Z-LLL-VS) in vitro. Functionally, component of the proteasome core, a large protease complex with broad specificity involved in protein degradation. The S.coelicolor proteasome is able to cleave oligopeptides after hydrophobic residues, but not after basic or acidic residues, thus displaying chymotrypsin-like activity but not trypsin-like activity. This Streptomyces coelicolor (strain ATCC BAA-471 / A3(2) / M145) protein is Proteasome subunit beta.